Reading from the N-terminus, the 587-residue chain is Folylpolyglutamate synthase, mitochondrial (587 aa).

The N-terminal 42 residues, 1-42 (MSWARTHLRSALSLAAVSARGATTEGAARRWLSAWPAPQEPG), are a transit peptide targeting the mitochondrion. Position 106-109 (106-109 (GKGS)) interacts with ATP. Positions 130, 200, and 228 each coordinate Mg(2+). 2 residues coordinate ATP: arginine 363 and aspartate 377. The interval 484–508 (PDFLSSPSPEPGRPGSLQPALRPPH) is disordered. Serine 539 bears the Phosphoserine mark.

This sequence belongs to the folylpolyglutamate synthase family. In terms of assembly, monomer. The cofactor is a monovalent cation.

Its subcellular location is the mitochondrion inner membrane. It localises to the mitochondrion matrix. The protein localises to the cytoplasm. The catalysed reaction is (6S)-5,6,7,8-tetrahydrofolyl-(gamma-L-Glu)(n) + L-glutamate + ATP = (6S)-5,6,7,8-tetrahydrofolyl-(gamma-L-Glu)(n+1) + ADP + phosphate + H(+). The protein operates within cofactor biosynthesis; tetrahydrofolylpolyglutamate biosynthesis. Functionally, catalyzes conversion of folates to polyglutamate derivatives allowing concentration of folate compounds in the cell and the intracellular retention of these cofactors, which are important substrates for most of the folate-dependent enzymes that are involved in one-carbon transfer reactions involved in purine, pyrimidine and amino acid synthesis. In Cricetulus griseus (Chinese hamster), this protein is Folylpolyglutamate synthase, mitochondrial (FPGS).